The chain runs to 461 residues: Probable carboxypeptidase MGYG_04702 (461 aa).

A signal peptide spans 1–20; it reads MQKTYLLALVSLLASSLVEA. 2 N-linked (GlcNAc...) asparagine glycosylation sites follow: Asn-48 and Asn-99. Asp-176 contributes to the Zn(2+) binding site. Glu-208 serves as the catalytic Proton acceptor. Residue Glu-209 participates in Zn(2+) binding. N-linked (GlcNAc...) asparagine glycosylation is present at Asn-396.

The protein belongs to the peptidase M20A family. It depends on Zn(2+) as a cofactor.

It is found in the secreted. The sequence is that of Probable carboxypeptidase MGYG_04702 from Arthroderma gypseum (strain ATCC MYA-4604 / CBS 118893) (Microsporum gypseum).